The sequence spans 753 residues: 5-methyltetrahydropteroyltriglutamate--homocysteine methyltransferase (753 aa).

Residues 17–20 (RELK) and lysine 117 each bind 5-methyltetrahydropteroyltri-L-glutamate. Residues 431–433 (IGS) and glutamate 484 contribute to the L-homocysteine site. L-methionine-binding positions include 431-433 (IGS) and glutamate 484. Residues 515–516 (RC) and tryptophan 561 contribute to the 5-methyltetrahydropteroyltri-L-glutamate site. Aspartate 599 is a binding site for L-homocysteine. Aspartate 599 contributes to the L-methionine binding site. Glutamate 605 contributes to the 5-methyltetrahydropteroyltri-L-glutamate binding site. Residues histidine 641, cysteine 643, and glutamate 665 each coordinate Zn(2+). Residue histidine 694 is the Proton donor of the active site. Residue cysteine 726 participates in Zn(2+) binding.

The protein belongs to the vitamin-B12 independent methionine synthase family. Requires Zn(2+) as cofactor.

The enzyme catalyses 5-methyltetrahydropteroyltri-L-glutamate + L-homocysteine = tetrahydropteroyltri-L-glutamate + L-methionine. Its pathway is amino-acid biosynthesis; L-methionine biosynthesis via de novo pathway; L-methionine from L-homocysteine (MetE route): step 1/1. Its function is as follows. Catalyzes the transfer of a methyl group from 5-methyltetrahydrofolate to homocysteine resulting in methionine formation. This chain is 5-methyltetrahydropteroyltriglutamate--homocysteine methyltransferase, found in Escherichia coli O157:H7.